The chain runs to 601 residues: DNA ligase (601 aa).

Position 258 (Asp-258) interacts with ATP. Residue Lys-260 is the N6-AMP-lysine intermediate of the active site. ATP contacts are provided by Arg-265, Arg-280, Glu-310, Phe-350, Arg-427, and Lys-433. The segment at 568 to 601 is disordered; it reads DKSPEDATTTDEILEMYNKQPKKKIESPPIDESV.

This sequence belongs to the ATP-dependent DNA ligase family. The cofactor is Mg(2+).

It carries out the reaction ATP + (deoxyribonucleotide)n-3'-hydroxyl + 5'-phospho-(deoxyribonucleotide)m = (deoxyribonucleotide)n+m + AMP + diphosphate.. Its function is as follows. DNA ligase that seals nicks in double-stranded DNA during DNA replication, DNA recombination and DNA repair. This chain is DNA ligase, found in Saccharolobus islandicus (strain Y.G.57.14 / Yellowstone #1) (Sulfolobus islandicus).